The chain runs to 115 residues: GTEVVVDQQKTISALLGASPGASTAAPITLNVLKQMFPQQFNSPEWQSRIHAIVPSYGQKLNGNVALTQQVWDDTAATLQLTKPPVIQMPAAAPTATAKPAETPREASPQHDMAL.

Residues 88–115 are disordered; that stretch reads QMPAAAPTATAKPAETPREASPQHDMAL. Positions 90–101 are enriched in low complexity; it reads PAAAPTATAKPA. Residues 102-115 show a composition bias toward basic and acidic residues; it reads ETPREASPQHDMAL.

This sequence belongs to the MQO family. The cofactor is FAD.

It catalyses the reaction (S)-malate + a quinone = a quinol + oxaloacetate. It participates in carbohydrate metabolism; tricarboxylic acid cycle; oxaloacetate from (S)-malate (quinone route): step 1/1. In Klebsiella pneumoniae, this protein is Probable malate:quinone oxidoreductase (mqo).